The chain runs to 102 residues: Late embryogenesis abundant protein D-19 (102 aa).

The tract at residues 1–102 (MASEQYQAMR…IDESKFRTKN (102 aa)) is disordered. Positions 48–58 (EGRHKGGETRK) are enriched in basic and acidic residues.

The protein belongs to the small hydrophilic plant seed protein family.

LEA proteins are late embryonic proteins abundant in higher plant seed embryos. There are two subsets of LEA proteins (5a and 5b), the first ones are expressed when the cotyledon weight reach 80 mg and the second set are expressed above 100 mg. The function of those proteins is not known. The chain is Late embryogenesis abundant protein D-19 from Gossypium hirsutum (Upland cotton).